Here is a 417-residue protein sequence, read N- to C-terminus: Serine hydroxymethyltransferase (417 aa).

(6S)-5,6,7,8-tetrahydrofolate-binding positions include leucine 120 and 124–126 (GHL). Lysine 229 bears the N6-(pyridoxal phosphate)lysine mark.

It belongs to the SHMT family. Homodimer. It depends on pyridoxal 5'-phosphate as a cofactor.

It localises to the cytoplasm. It catalyses the reaction (6R)-5,10-methylene-5,6,7,8-tetrahydrofolate + glycine + H2O = (6S)-5,6,7,8-tetrahydrofolate + L-serine. It functions in the pathway one-carbon metabolism; tetrahydrofolate interconversion. It participates in amino-acid biosynthesis; glycine biosynthesis; glycine from L-serine: step 1/1. Catalyzes the reversible interconversion of serine and glycine with tetrahydrofolate (THF) serving as the one-carbon carrier. This reaction serves as the major source of one-carbon groups required for the biosynthesis of purines, thymidylate, methionine, and other important biomolecules. Also exhibits THF-independent aldolase activity toward beta-hydroxyamino acids, producing glycine and aldehydes, via a retro-aldol mechanism. This chain is Serine hydroxymethyltransferase, found in Anaeromyxobacter sp. (strain Fw109-5).